Here is a 400-residue protein sequence, read N- to C-terminus: S-adenosylmethionine synthase (400 aa).

137-142 contributes to the ATP binding site; sequence GEGSGD.

Belongs to the AdoMet synthase 2 family. Mg(2+) serves as cofactor.

It catalyses the reaction L-methionine + ATP + H2O = S-adenosyl-L-methionine + phosphate + diphosphate. It participates in amino-acid biosynthesis; S-adenosyl-L-methionine biosynthesis; S-adenosyl-L-methionine from L-methionine: step 1/1. Catalyzes the formation of S-adenosylmethionine from methionine and ATP. This Haloarcula marismortui (strain ATCC 43049 / DSM 3752 / JCM 8966 / VKM B-1809) (Halobacterium marismortui) protein is S-adenosylmethionine synthase.